The following is a 370-amino-acid chain: Luciferin sulfotransferase (370 aa).

Residue 90-95 (KAGTTW) coordinates 3'-phosphoadenylyl sulfate. The Proton acceptor role is filled by H165. 3'-phosphoadenylyl sulfate-binding positions include R189, S197, Y250, 284–289 (LSFESM), and 316–320 (FMRSG).

This sequence belongs to the sulfotransferase 1 family.

The enzyme catalyses firefly D-luciferin + 3'-phosphoadenylyl sulfate = firefly D-sulfoluciferin + adenosine 3',5'-bisphosphate + H(+). It carries out the reaction firefly L-luciferin + 3'-phosphoadenylyl sulfate = firefly L-sulfoluciferin + adenosine 3',5'-bisphosphate + H(+). Sulfoluciferin formation is inhibited by the product adenosine 3',5'-bisphosphate. Catalyzes the production of firefly sulfoluciferin from luciferin using the sulfo-donor 3'-phosphoadenylyl sulfate (PAPS). Is also able to catalyze the reverse reaction, i.e. the adenosine 3',5'-bisphosphate-dependent desulfonation of sulfoluciferin. Can use either D- or L-luciferin stereoisomer as substrate. Sulfoluciferin, which is not a substrate of P.pyralis luciferase, likely serves as a luciferin storage form in fireflies. In Photinus pyralis (Common eastern firefly), this protein is Luciferin sulfotransferase.